We begin with the raw amino-acid sequence, 119 residues long: DNA-binding protein inhibitor ID-3 (119 aa).

Positions 28-80 (RGKGPAAEEPLSLLDDMNHCYSRLRELVPGVPRGTQLSQVEILQRVIDYILDL) constitute a bHLH domain.

As to quaternary structure, homodimer, and heterodimer with other HLH proteins. Interacts with COPS5 and COPS7A. Interacts with IFI204. Interacts with GATA4 and NKX2-5. Interacts with ANKRD2; both proteins cooperate in myoblast differentiation. Interacts with CLOCK and BMAL1.

It is found in the nucleus. Transcriptional regulator (lacking a basic DNA binding domain) which negatively regulates the basic helix-loop-helix (bHLH) transcription factors by forming heterodimers and inhibiting their DNA binding and transcriptional activity. Implicated in regulating a variety of cellular processes, including cellular growth, senescence, differentiation, apoptosis, angiogenesis, and neoplastic transformation. Involved in myogenesis by inhibiting skeletal muscle and cardiac myocyte differentiation and promoting muscle precursor cells proliferation. Inhibits the binding of E2A-containing protein complexes to muscle creatine kinase E-box enhancer. Regulates the circadian clock by repressing the transcriptional activator activity of the CLOCK-BMAL1 heterodimer. This Canis lupus familiaris (Dog) protein is DNA-binding protein inhibitor ID-3 (ID3).